The primary structure comprises 215 residues: Polysialic acid O-acetyltransferase (215 aa).

Acetyl-CoA-binding positions include 119–121 (DMH), R148, K154, S166, 171–172 (YK), and K190.

The protein belongs to the transferase hexapeptide repeat family. In terms of assembly, homotrimer.

It catalyses the reaction [(2-&gt;6)-alpha-D-glucosyl-(1-&gt;4)-N-acetyl-alpha-D-neuraminosyl](n) + n acetyl-CoA = [(2-&gt;6)-alpha-D-glucosyl-(1-&gt;4)-N,7-O-diacetyl-alpha-D-neuraminosyl](n) + n CoA. The catalysed reaction is [(2-&gt;6)-alpha-D-glucosyl-(1-&gt;4)-N-acetyl-alpha-D-neuraminosyl](n) + n acetyl-CoA = [(2-&gt;6)-alpha-D-glucosyl-(1-&gt;4)-N,O(9)-diacetyl-alpha-D-neuraminosyl](n) + n CoA. Catalyzes the O-acetylation of capsular polymeric sialic acid consisting of polymers of (2-&gt;6)-alpha-D-glucosyl-(1-&gt;4)-N-acetyl-alpha-D-neuraminosyl residues. Shows high substrate specificity toward polymers of sialic acid that contains a large number of residues. This Neisseria meningitidis protein is Polysialic acid O-acetyltransferase.